The primary structure comprises 454 residues: tRNA modification GTPase MnmE (454 aa).

(6S)-5-formyl-5,6,7,8-tetrahydrofolate-binding residues include Arg-23, Glu-80, and Lys-120. Residues 216-377 form the TrmE-type G domain; it reads GMKVVIAGRP…LRNHLKQSMG (162 aa). Asn-226 is a K(+) binding site. Residues 226-231, 245-251, 270-273, 335-338, and 358-360 each bind GTP; these read NAGKSS, TDIAGTT, DTAG, NKAD, and SAR. Ser-230 lines the Mg(2+) pocket. 3 residues coordinate K(+): Thr-245, Ile-247, and Thr-250. Position 251 (Thr-251) interacts with Mg(2+). Position 454 (Lys-454) interacts with (6S)-5-formyl-5,6,7,8-tetrahydrofolate.

Belongs to the TRAFAC class TrmE-Era-EngA-EngB-Septin-like GTPase superfamily. TrmE GTPase family. In terms of assembly, homodimer. Heterotetramer of two MnmE and two MnmG subunits. K(+) is required as a cofactor.

It is found in the cytoplasm. Exhibits a very high intrinsic GTPase hydrolysis rate. Involved in the addition of a carboxymethylaminomethyl (cmnm) group at the wobble position (U34) of certain tRNAs, forming tRNA-cmnm(5)s(2)U34. The chain is tRNA modification GTPase MnmE from Salmonella paratyphi C (strain RKS4594).